We begin with the raw amino-acid sequence, 807 residues long: Glycerol-3-phosphate acyltransferase (807 aa).

Residues 305–310 (CHRSHM) carry the HXXXXD motif motif.

It belongs to the GPAT/DAPAT family.

It localises to the cell inner membrane. It catalyses the reaction sn-glycerol 3-phosphate + an acyl-CoA = a 1-acyl-sn-glycero-3-phosphate + CoA. The protein operates within phospholipid metabolism; CDP-diacylglycerol biosynthesis; CDP-diacylglycerol from sn-glycerol 3-phosphate: step 1/3. This is Glycerol-3-phosphate acyltransferase from Shigella boydii serotype 18 (strain CDC 3083-94 / BS512).